Consider the following 198-residue polypeptide: Methyl-coenzyme M reductase operon protein C (198 aa).

In terms of assembly, MCR is composed of three subunits: alpha, beta, and gamma. The function of proteins C and D is not known.

In Methanococcus vannielii, this protein is Methyl-coenzyme M reductase operon protein C (mcrC).